The sequence spans 213 residues: Nickel-cobalt-cadmium resistance protein NccN (213 aa).

Helical transmembrane passes span 24 to 44 (IGIWRVVVSVVLIALITGHSQ), 48 to 68 (TWISAALLTVGMLGVTMATVG), 113 to 133 (ESITLAAILALAFALMYPAVI), and 180 to 200 (NLADSVWFLGMTIVVNAVELA).

This sequence to A.eutrophus CzcN.

The protein resides in the cell inner membrane. Its function is as follows. Component of the NCC cation-efflux system that confers resistance to nickel, cobalt and cadmium. Appears to be involved in metal specificity but affects only nickel resistance. May be involved in nickel transport. The polypeptide is Nickel-cobalt-cadmium resistance protein NccN (nccN) (Alcaligenes xylosoxydans xylosoxydans (Achromobacter xylosoxidans)).